The following is a 273-amino-acid chain: Undecaprenyl-diphosphatase (273 aa).

7 consecutive transmembrane segments (helical) span residues 13-35 (GLVE…VFGN), 45-62 (VFEI…VFEY), 82-102 (FVLN…LFGK), 108-128 (LFNP…ILWV), 186-206 (TEFS…YDVL), 219-239 (LILI…KALL), and 250-270 (FAYY…SGWI).

It belongs to the UppP family.

It is found in the cell inner membrane. The enzyme catalyses di-trans,octa-cis-undecaprenyl diphosphate + H2O = di-trans,octa-cis-undecaprenyl phosphate + phosphate + H(+). In terms of biological role, catalyzes the dephosphorylation of undecaprenyl diphosphate (UPP). Confers resistance to bacitracin. The chain is Undecaprenyl-diphosphatase from Neisseria meningitidis serogroup A / serotype 4A (strain DSM 15465 / Z2491).